The following is a 270-amino-acid chain: Aliphatic sulfonates import ATP-binding protein SsuB 3 (270 aa).

In terms of domain architecture, ABC transporter spans 17–238; it reads LAVRNLKKAF…VRGSHRLAAL (222 aa). 49–56 lines the ATP pocket; it reads GRSGCGKS.

It belongs to the ABC transporter superfamily. Aliphatic sulfonates importer (TC 3.A.1.17.2) family. The complex is composed of two ATP-binding proteins (SsuB), two transmembrane proteins (SsuC) and a solute-binding protein (SsuA).

The protein resides in the cell inner membrane. It carries out the reaction ATP + H2O + aliphatic sulfonate-[sulfonate-binding protein]Side 1 = ADP + phosphate + aliphatic sulfonateSide 2 + [sulfonate-binding protein]Side 1.. Part of the ABC transporter complex SsuABC involved in aliphatic sulfonates import. Responsible for energy coupling to the transport system. This chain is Aliphatic sulfonates import ATP-binding protein SsuB 3, found in Pseudomonas savastanoi pv. phaseolicola (strain 1448A / Race 6) (Pseudomonas syringae pv. phaseolicola (strain 1448A / Race 6)).